The sequence spans 279 residues: Putative pyruvate, phosphate dikinase regulatory protein (279 aa).

153–160 (GISRTSKT) is an ADP binding site.

This sequence belongs to the pyruvate, phosphate/water dikinase regulatory protein family. PDRP subfamily.

It carries out the reaction N(tele)-phospho-L-histidyl/L-threonyl-[pyruvate, phosphate dikinase] + ADP = N(tele)-phospho-L-histidyl/O-phospho-L-threonyl-[pyruvate, phosphate dikinase] + AMP + H(+). The enzyme catalyses N(tele)-phospho-L-histidyl/O-phospho-L-threonyl-[pyruvate, phosphate dikinase] + phosphate + H(+) = N(tele)-phospho-L-histidyl/L-threonyl-[pyruvate, phosphate dikinase] + diphosphate. Its function is as follows. Bifunctional serine/threonine kinase and phosphorylase involved in the regulation of the pyruvate, phosphate dikinase (PPDK) by catalyzing its phosphorylation/dephosphorylation. The sequence is that of Putative pyruvate, phosphate dikinase regulatory protein from Bartonella bacilliformis (strain ATCC 35685 / KC583 / Herrer 020/F12,63).